The primary structure comprises 965 residues: MEKTPATQTQAEPSLDKTYNPKEIEQPLYNHWEKSGYFKPNGDTSRESFCIVIPPPNVTGSLHMGHAFQQTIMDTMIRYQRMQGKNTLWQSGTDHAGIATQMVVERKIAAEEGKTRHDYGREAFIDKIWQWKAESGGTITNQMRRLGNSVDWERERFTMDEGLSNAVKEAFVRLYQENLIYRGKRLVNWDPKLHTAISDLEVENREVKGSMWHLRYPLADGVTTAEGKDYLIVATTRPETMLGDTGVAVNPEDPRYKDLIGKEIILPLINRRIPIIGDEHADMEKGTGCVKITPAHDFNDYEVGKRHALPMINIMTFDGNIRHKAEVFDTHGEISDSYSSDIPAEYQGIERFAARKTIVAEFERLGLLVEIKAHDLTVPYGDRGGVVIEPMLTDQWYVRTAPLAKVAIEAVENGDIQFVPKQYENMYYSWMRDIQDWCISRQLWWGHRIPAWYDTNGNVYVGRSEEEVRRENNLGTDISLNQDEDVLDTWFSSGLWTFSTLGWPEQTDALKTFHPTDVLVSGFDIIFFWIARMIMMTMHFIKDENGKPQVPFKTVYMTGLIRDEEGQKMSKSKGNVIDPLDMVDGISLEELLEKRTGNMMQPQLAEKIRKRTEKQFPAGIETHGTDALRFTLAALASTGRDINWDMKRLQGYRNFCNKLWNASRFVLMNTEGQDCGQHGGEMALSLADRWILAEFNQTVKAYREALDTYRFDMAANILYEFTWNQFCDWYLELSKPAINKGSEAEVRGARHTLIEVLEGLLRLAHPIIPFITETIWQRVKIVKGIEADTIMLQPFPEFAQEKTDELALTDLEWIKEAIIAVRNIRAEMNIAPGKPLEVLLRNADAGAQRRVAENLNFIQAMGRLSSVTLLSTDEEAPISVTKLINGAEVLIPMAGLVDKEAELSRLNKEIEKLDKEIGAIEGKLSNEGFVSRAPEAVVTKERERLANCNTSKEKLLAQKETIAAL.

Residues 1–12 (MEKTPATQTQAE) show a composition bias toward polar residues. Residues 1-23 (MEKTPATQTQAEPSLDKTYNPKE) are disordered. Positions 56-66 (PNVTGSLHMGH) match the 'HIGH' region motif. The 'KMSKS' region signature appears at 568–572 (KMSKS). ATP is bound at residue lysine 571. Positions 893–960 (MAGLVDKEAE…SKEKLLAQKE (68 aa)) form a coiled coil.

This sequence belongs to the class-I aminoacyl-tRNA synthetase family. ValS type 1 subfamily. As to quaternary structure, monomer.

It localises to the cytoplasm. The enzyme catalyses tRNA(Val) + L-valine + ATP = L-valyl-tRNA(Val) + AMP + diphosphate. In terms of biological role, catalyzes the attachment of valine to tRNA(Val). As ValRS can inadvertently accommodate and process structurally similar amino acids such as threonine, to avoid such errors, it has a 'posttransfer' editing activity that hydrolyzes mischarged Thr-tRNA(Val) in a tRNA-dependent manner. This Photorhabdus laumondii subsp. laumondii (strain DSM 15139 / CIP 105565 / TT01) (Photorhabdus luminescens subsp. laumondii) protein is Valine--tRNA ligase.